Reading from the N-terminus, the 373-residue chain is Sterol-4-alpha-carboxylate 3-dehydrogenase, decarboxylating (373 aa).

Residue M1 is modified to N-acetylmethionine. T22 is subject to Phosphothreonine. Residue Y172 is the Proton acceptor of the active site. Residue K176 participates in NAD(+) binding. Residues 298-318 (WVAYYLALLLSLLVMVISPVI) form a helical membrane-spanning segment. Positions 370–373 (RRVK) match the Prevents secretion from ER motif.

Belongs to the 3-beta-HSD family. In terms of assembly, homodimer. Brain, heart, liver, lung, kidney, skin and placenta.

It localises to the endoplasmic reticulum membrane. The protein resides in the lipid droplet. It carries out the reaction a 3beta-hydroxysteroid-4alpha-carboxylate + NADP(+) = a 3-oxosteroid + CO2 + NADPH. The catalysed reaction is a 3beta-hydroxysteroid-4alpha-carboxylate + NAD(+) = a 3-oxosteroid + CO2 + NADH. The enzyme catalyses 4alpha-carboxyzymosterol + NADP(+) = zymosterone + CO2 + NADPH. It catalyses the reaction 4alpha-carboxy-4beta-methyl-5alpha-cholest-8-en-3beta-ol + NADP(+) = 4alpha-methyl-5alpha-cholest-8-en-3-one + CO2 + NADPH. It carries out the reaction 4alpha-carboxy-5alpha-cholest-8-ene-3beta-ol + NADP(+) = 5alpha-cholest-8-en-3-one + CO2 + NADPH. The catalysed reaction is 4beta-methylzymosterol-4alpha-carboxylate + NADP(+) = 3-dehydro-4-methylzymosterol + CO2 + NADPH. The enzyme catalyses 4beta-methylzymosterol-4alpha-carboxylate + NAD(+) = 3-dehydro-4-methylzymosterol + CO2 + NADH. It catalyses the reaction 4alpha-carboxy-5alpha-cholest-8-ene-3beta-ol + NAD(+) = 5alpha-cholest-8-en-3-one + CO2 + NADH. It carries out the reaction 4alpha-carboxy-4beta-methyl-5alpha-cholest-8-en-3beta-ol + NAD(+) = 4alpha-methyl-5alpha-cholest-8-en-3-one + CO2 + NADH. The catalysed reaction is 4alpha-carboxyzymosterol + NAD(+) = zymosterone + CO2 + NADH. Its pathway is steroid biosynthesis; zymosterol biosynthesis; zymosterol from lanosterol: step 4/6. Functionally, catalyzes the NAD(P)(+)-dependent oxidative decarboxylation of the C4 methyl groups of 4-alpha-carboxysterols in post-squalene cholesterol biosynthesis. Also plays a role in the regulation of the endocytic trafficking of EGFR. In Homo sapiens (Human), this protein is Sterol-4-alpha-carboxylate 3-dehydrogenase, decarboxylating (NSDHL).